A 1121-amino-acid polypeptide reads, in one-letter code: Pleckstrin homology domain-containing family A member 7 (1121 aa).

2 consecutive WW domains span residues 9–42 (DTLP…HPRT) and 54–87 (SDLP…HPVT). The disordered stretch occupies residues 105–137 (PHMSKQDRNQRPSSMVSETSTAGTASTLEAKPG). The span at 115–131 (RPSSMVSETSTAGTAST) shows a compositional bias: polar residues. One can recognise a PH domain in the interval 164-282 (PVVVRGWLHK…WVRAMNQAAQ (119 aa)). A disordered region spans residues 299–514 (QAVPQANHTE…LKMSSEERRA (216 aa)). 2 stretches are compositionally biased toward basic and acidic residues: residues 308–356 (ESCH…EGKR) and 437–446 (HWARAQKGDS). Polar residues predominate over residues 460–475 (PGQSLSFPENYQTLPK). The span at 497–514 (YAQDRASHLKMSSEERRA) shows a compositional bias: basic and acidic residues. 6 positions are modified to phosphoserine: serine 536, serine 545, serine 569, serine 604, serine 608, and serine 612. The tract at residues 538–696 (TAPICLGSPE…AESDTDVKLS (159 aa)) is interaction with CTNND1. The segment at 547 to 632 (EFTDQGRSRS…NSSHVDRRSM (86 aa)) is disordered. Residues 567–582 (PPSPSDIPPPGPPRVF) are compositionally biased toward pro residues. The span at 589-605 (TPAERVTVKPPDQRRSV) shows a compositional bias: basic and acidic residues. Positions 700-801 (EQDRVLQDLE…LQEQHRRAFF (102 aa)) form a coiled coil. Disordered stretches follow at residues 841–876 (RKTV…VRTP) and 888–971 (YVPY…ELGQ). Serine 858, serine 860, and serine 867 each carry phosphoserine. Residues 861 to 871 (KPPPQPSPPTS) show a composition bias toward pro residues. The residue at position 870 (threonine 870) is a Phosphothreonine. 3 positions are modified to phosphoserine: serine 871, serine 903, and serine 907. The span at 933–942 (DQPPAVPPLP) shows a compositional bias: pro residues. Residues 958-969 (RQSDERKRDREL) show a composition bias toward basic and acidic residues. Serine 986 is modified (phosphoserine). Disordered regions lie at residues 1003–1028 (GLVG…RLQQ) and 1082–1121 (RHQK…GSVC). Residues 1067–1094 (QRGKMSAEEQLERMKRHQKALVRERKRT) are a coiled coil. Positions 1082-1094 (RHQKALVRERKRT) are enriched in basic residues.

Interacts with CAMSAP3 and CTNND1. Interacts (via WW domains) with TSPAN33 (via cytoplasmic domain) and with PDZD11; the interaction with TSPAN33 is dependent on PDZD11 being bound to PLEKHA7 and facilitates the docking of ADAM10 to zonula adherens through interaction of TSPAN33 with ADAM10.

The protein localises to the cell junction. Its subcellular location is the adherens junction. It is found in the cytoplasm. The protein resides in the cytoskeleton. It localises to the microtubule organizing center. The protein localises to the centrosome. Functionally, required for zonula adherens biogenesis and maintenance. Acts via its interaction with CAMSAP3, which anchors microtubules at their minus-ends to zonula adherens, leading to the recruitment of KIFC3 kinesin to the junctional site. Mediates docking of ADAM10 to zonula adherens through a PDZD11-dependent interaction with the ADAM10-binding protein TSPAN33. The sequence is that of Pleckstrin homology domain-containing family A member 7 (PLEKHA7) from Homo sapiens (Human).